Consider the following 801-residue polypeptide: U-box domain-containing protein 34 (801 aa).

A disordered region spans residues 205–309 (RSPTLPDPRQ…PETSRKSKKV (105 aa)). Over residues 236–254 (LTCNKPKTPQSSKASSATT) the composition is skewed to polar residues. Over residues 289–309 (VSEHRDSDRSPPETSRKSKKV) the composition is skewed to basic and acidic residues. The stretch at 301–395 (ETSRKSKKVE…ETAKALLARE (95 aa)) forms a coiled coil. A Protein kinase domain is found at 442–705 (FSPEKVIGEG…DLKSEVIPVL (264 aa)). ATP is bound by residues 448-456 (IGEGGYGKV) and lysine 469. Aspartate 564 acts as the Proton acceptor in catalysis. Residues 724–797 (RAPSHYFCPI…RDWKSRVRFS (74 aa)) form the U-box domain.

This sequence belongs to the protein kinase superfamily. Ser/Thr protein kinase family.

It carries out the reaction L-seryl-[protein] + ATP = O-phospho-L-seryl-[protein] + ADP + H(+). It catalyses the reaction L-threonyl-[protein] + ATP = O-phospho-L-threonyl-[protein] + ADP + H(+). The enzyme catalyses S-ubiquitinyl-[E2 ubiquitin-conjugating enzyme]-L-cysteine + [acceptor protein]-L-lysine = [E2 ubiquitin-conjugating enzyme]-L-cysteine + N(6)-ubiquitinyl-[acceptor protein]-L-lysine.. Its pathway is protein modification; protein ubiquitination. In terms of biological role, functions as an E3 ubiquitin ligase. In Arabidopsis thaliana (Mouse-ear cress), this protein is U-box domain-containing protein 34 (PUB34).